The primary structure comprises 319 residues: HPr kinase/phosphorylase (319 aa).

Catalysis depends on residues His137 and Lys158. Position 152–159 (152–159 (GDSGVGKS)) interacts with ATP. Ser159 contacts Mg(2+). Asp176 acts as the Proton acceptor; for phosphorylation activity. Proton donor; for dephosphorylation activity in catalysis. Residues 201–210 (MEIRGLGIIN) are important for the catalytic mechanism of both phosphorylation and dephosphorylation. Glu202 serves as a coordination point for Mg(2+). Arg243 is an active-site residue. Positions 264 to 269 (PVRPGR) are important for the catalytic mechanism of dephosphorylation.

It belongs to the HPrK/P family. As to quaternary structure, homohexamer. The cofactor is Mg(2+).

The enzyme catalyses [HPr protein]-L-serine + ATP = [HPr protein]-O-phospho-L-serine + ADP + H(+). It carries out the reaction [HPr protein]-O-phospho-L-serine + phosphate + H(+) = [HPr protein]-L-serine + diphosphate. In terms of biological role, catalyzes the ATP- as well as the pyrophosphate-dependent phosphorylation of a specific serine residue in HPr, a phosphocarrier protein of the phosphoenolpyruvate-dependent sugar phosphotransferase system (PTS). HprK/P also catalyzes the pyrophosphate-producing, inorganic phosphate-dependent dephosphorylation (phosphorolysis) of seryl-phosphorylated HPr (P-Ser-HPr). The polypeptide is HPr kinase/phosphorylase (Treponema pallidum subsp. pallidum (strain SS14)).